A 129-amino-acid chain; its full sequence is Sulfurtransferase TusD (129 aa).

Cysteine 79 (cysteine persulfide intermediate) is an active-site residue.

Belongs to the DsrE/TusD family. As to quaternary structure, heterohexamer, formed by a dimer of trimers. The hexameric TusBCD complex contains 2 copies each of TusB, TusC and TusD. The TusBCD complex interacts with TusE.

The protein resides in the cytoplasm. Part of a sulfur-relay system required for 2-thiolation of 5-methylaminomethyl-2-thiouridine (mnm(5)s(2)U) at tRNA wobble positions. Accepts sulfur from TusA and transfers it in turn to TusE. This is Sulfurtransferase TusD from Pectobacterium atrosepticum (strain SCRI 1043 / ATCC BAA-672) (Erwinia carotovora subsp. atroseptica).